Consider the following 222-residue polypeptide: Probable nicotinate-nucleotide adenylyltransferase (222 aa).

It belongs to the NadD family.

It carries out the reaction nicotinate beta-D-ribonucleotide + ATP + H(+) = deamido-NAD(+) + diphosphate. Its pathway is cofactor biosynthesis; NAD(+) biosynthesis; deamido-NAD(+) from nicotinate D-ribonucleotide: step 1/1. Catalyzes the reversible adenylation of nicotinate mononucleotide (NaMN) to nicotinic acid adenine dinucleotide (NaAD). The chain is Probable nicotinate-nucleotide adenylyltransferase from Xylella fastidiosa (strain M23).